The chain runs to 390 residues: Pyruvate dehydrogenase E1 component subunit alpha, somatic form, mitochondrial (390 aa).

The transit peptide at 1–29 (MRKMLAAVSRVLSGASQKPASRVLVASRN) directs the protein to the mitochondrion. At Lys-63 the chain carries N6-acetyllysine; alternate. Lys-63 is subject to N6-succinyllysine; alternate. His-92, Tyr-118, Arg-119, Ala-157, Gly-165, Val-167, Asp-196, Gly-197, Ala-198, Asn-225, and Tyr-227 together coordinate pyruvate. Thiamine diphosphate is bound by residues Tyr-118 and Arg-119. Thiamine diphosphate is bound by residues Gly-165, Val-167, Asp-196, Gly-197, Ala-198, and Asn-225. Mg(2+) is bound at residue Asp-196. 2 residues coordinate Mg(2+): Asn-225 and Tyr-227. Phosphoserine; by PDK1 is present on Ser-232. At Lys-244 the chain carries N6-acetyllysine; alternate. Position 244 is an N6-succinyllysine; alternate (Lys-244). Position 277 is an N6-succinyllysine (Lys-277). His-292 is a binding site for thiamine diphosphate. Residue Ser-293 is modified to Phosphoserine; by PDK1, PDK2, PDK3 and PDK4. Residue Ser-295 is modified to Phosphoserine. Ser-300 is subject to Phosphoserine; by PDK1, PDK2, PDK3 and PDK4. Residue Tyr-301 is modified to Phosphotyrosine. Lys-313 carries the post-translational modification N6-acetyllysine; alternate. Lys-313 carries the N6-succinyllysine; alternate modification. Lys-321 and Lys-336 each carry N6-acetyllysine. Lys-385 bears the N6-succinyllysine mark.

As to quaternary structure, heterotetramer of two PDHA1 and two PDHB subunits. The heterotetramer interacts with DLAT, and is part of the multimeric pyruvate dehydrogenase complex that contains multiple copies of pyruvate dehydrogenase (E1), dihydrolipoamide acetyltransferase (DLAT, E2) and lipoamide dehydrogenase (DLD, E3). These subunits are bound to an inner core composed of about 48 DLAT and 12 PDHX molecules. The cofactor is thiamine diphosphate. It depends on Mg(2+) as a cofactor. Phosphorylation at Ser-232, Ser-293 and Ser-300 by PDK family kinases inactivates the enzyme; for this phosphorylation at a single site is sufficient. Dephosphorylation at all three sites, i.e. at Ser-232, Ser-293 and Ser-300, is required for reactivation. In terms of processing, acetylation alters the phosphorylation pattern. Deacetylated by SIRT3. As to expression, ubiquitous.

It is found in the mitochondrion matrix. The enzyme catalyses N(6)-[(R)-lipoyl]-L-lysyl-[protein] + pyruvate + H(+) = N(6)-[(R)-S(8)-acetyldihydrolipoyl]-L-lysyl-[protein] + CO2. With respect to regulation, pyruvate dehydrogenase activity is inhibited by phosphorylation of PDHA1; it is reactivated by dephosphorylation. The pyruvate dehydrogenase complex catalyzes the overall conversion of pyruvate to acetyl-CoA and CO(2), and thereby links the glycolytic pathway to the tricarboxylic cycle. The polypeptide is Pyruvate dehydrogenase E1 component subunit alpha, somatic form, mitochondrial (PDHA1) (Homo sapiens (Human)).